The sequence spans 200 residues: MAGFKQLSGLVVPLDAANVDTDAIIPKQFLQAITRVGFGKHLFHEWRYLDVDGTKPNPEFVLNYPQYQGATILLARKNLGCGSSREHAPWALADYGFKVMIAPSFADIFYNNSLNNHMLPIRLSEEEVEEIFQWVWANESKQIHVDLEAMTVTVGDKVYTFELDEFRRHCLLNGLDNIGLTLQHEDKISAYEKNIPAFLR.

It belongs to the LeuD family. LeuD type 1 subfamily. As to quaternary structure, heterodimer of LeuC and LeuD.

It carries out the reaction (2R,3S)-3-isopropylmalate = (2S)-2-isopropylmalate. The protein operates within amino-acid biosynthesis; L-leucine biosynthesis; L-leucine from 3-methyl-2-oxobutanoate: step 2/4. Catalyzes the isomerization between 2-isopropylmalate and 3-isopropylmalate, via the formation of 2-isopropylmaleate. This Haemophilus influenzae (strain PittEE) protein is 3-isopropylmalate dehydratase small subunit.